A 526-amino-acid chain; its full sequence is tRNA-2-methylthio-N(6)-dimethylallyladenosine synthase (526 aa).

The MTTase N-terminal domain occupies 14-130; the sequence is RTYQVRTYGC…LPTLLERARH (117 aa). The [4Fe-4S] cluster site is built by Cys23, Cys59, Cys93, Cys167, Cys171, and Cys174. Positions 153–401 constitute a Radical SAM core domain; it reads RESAYAGWVS…IELQERISLE (249 aa). A TRAM domain is found at 404 to 483; it reads QAQVGRTLEL…PHHLIADGAL (80 aa).

The protein belongs to the methylthiotransferase family. MiaB subfamily. In terms of assembly, monomer. Requires [4Fe-4S] cluster as cofactor.

The protein localises to the cytoplasm. It catalyses the reaction N(6)-dimethylallyladenosine(37) in tRNA + (sulfur carrier)-SH + AH2 + 2 S-adenosyl-L-methionine = 2-methylsulfanyl-N(6)-dimethylallyladenosine(37) in tRNA + (sulfur carrier)-H + 5'-deoxyadenosine + L-methionine + A + S-adenosyl-L-homocysteine + 2 H(+). Functionally, catalyzes the methylthiolation of N6-(dimethylallyl)adenosine (i(6)A), leading to the formation of 2-methylthio-N6-(dimethylallyl)adenosine (ms(2)i(6)A) at position 37 in tRNAs that read codons beginning with uridine. The sequence is that of tRNA-2-methylthio-N(6)-dimethylallyladenosine synthase from Mycobacterium sp. (strain JLS).